A 112-amino-acid polypeptide reads, in one-letter code: Transmembrane protein 14 homolog (112 aa).

Transmembrane regions (helical) follow at residues 9 to 26 (FKLN…GVIG), 36 to 53 (LIAG…AYYL), 60 to 77 (VGLG…GVMG), and 87 to 109 (IPII…LYNI).

It belongs to the TMEM14 family.

It localises to the membrane. This chain is Transmembrane protein 14 homolog, found in Dictyostelium discoideum (Social amoeba).